Here is a 181-residue protein sequence, read N- to C-terminus: 28 kDa heat- and acid-stable phosphoprotein (181 aa).

Basic residues predominate over residues 1 to 14 (MPKGGRKGGHKGRA). The segment at 1–117 (MPKGGRKGGH…SRREREEIEK (117 aa)) is disordered. Residue threonine 18 is modified to Phosphothreonine. Residue serine 19 is modified to Phosphoserine. Basic and acidic residues predominate over residues 30-59 (EKQKAREEEEQKEGGDGAAGDPKKEKKSLD). Residue lysine 52 forms a Glycyl lysine isopeptide (Lys-Gly) (interchain with G-Cter in SUMO2) linkage. 3 positions are modified to phosphoserine: serine 57, serine 60, and serine 63. The span at 60–69 (SDESEDEEDD) shows a compositional bias: acidic residues. At tyrosine 70 the chain carries Phosphotyrosine. The segment covering 102–117 (DGPKELSRREREEIEK) has biased composition (basic and acidic residues). Lysine 126 is modified (N6-methyllysine). 2 positions are modified to N6-acetyllysine: lysine 132 and lysine 164. The segment covering 151–167 (EEAARKKEEERKAKDDA) has biased composition (basic and acidic residues). The tract at residues 151–181 (EEAARKKEEERKAKDDATLSGKRMQSLSLNK) is disordered. Serine 176 and serine 178 each carry phosphoserine.

Belongs to the PDAP1 family.

Enhances PDGFA-stimulated cell growth in fibroblasts, but inhibits the mitogenic effect of PDGFB. The sequence is that of 28 kDa heat- and acid-stable phosphoprotein (PDAP1) from Homo sapiens (Human).